The following is a 252-amino-acid chain: Enolase-phosphatase E1 (252 aa).

Positions 14 and 16 each coordinate Mg(2+). Substrate contacts are provided by residues 142–143 (SS) and lysine 176. Aspartate 201 lines the Mg(2+) pocket.

The protein belongs to the HAD-like hydrolase superfamily. MasA/MtnC family. Monomer. Requires Mg(2+) as cofactor.

It localises to the cytoplasm. The protein localises to the nucleus. The enzyme catalyses 5-methylsulfanyl-2,3-dioxopentyl phosphate + H2O = 1,2-dihydroxy-5-(methylsulfanyl)pent-1-en-3-one + phosphate. The protein operates within amino-acid biosynthesis; L-methionine biosynthesis via salvage pathway; L-methionine from S-methyl-5-thio-alpha-D-ribose 1-phosphate: step 3/6. It functions in the pathway amino-acid biosynthesis; L-methionine biosynthesis via salvage pathway; L-methionine from S-methyl-5-thio-alpha-D-ribose 1-phosphate: step 4/6. Its function is as follows. Bifunctional enzyme that catalyzes the enolization of 2,3-diketo-5-methylthiopentyl-1-phosphate (DK-MTP-1-P) into the intermediate 2-hydroxy-3-keto-5-methylthiopentenyl-1-phosphate (HK-MTPenyl-1-P), which is then dephosphorylated to form the acireductone 1,2-dihydroxy-3-keto-5-methylthiopentene (DHK-MTPene). The chain is Enolase-phosphatase E1 from Drosophila ananassae (Fruit fly).